The chain runs to 727 residues: Glycerol-3-phosphate dehydrogenase, mitochondrial (727 aa).

The N-terminal 42 residues, 1-42 (MAFQKAVKGTILVGGGALATVLGLSHFAHYKRKQVNLAFVEA), are a transit peptide targeting the mitochondrion. 71–99 (DVLVIGGGATGSGCALDAVTRGLKTALVE) contributes to the FAD binding site. Position 601 is a phosphotyrosine (Y601). 2 consecutive EF-hand domains span residues 623 to 658 (SDID…IGVQ) and 659 to 694 (MDEN…IQKG). Ca(2+) contacts are provided by D672, N674, N676, Q678, and E683.

It belongs to the FAD-dependent glycerol-3-phosphate dehydrogenase family. The cofactor is FAD.

Its subcellular location is the mitochondrion. It carries out the reaction a quinone + sn-glycerol 3-phosphate = dihydroxyacetone phosphate + a quinol. Its pathway is polyol metabolism; glycerol degradation via glycerol kinase pathway; glycerone phosphate from sn-glycerol 3-phosphate (aerobic route): step 1/1. With respect to regulation, calcium-binding enhance the activity of the enzyme. In terms of biological role, calcium-responsive mitochondrial glycerol-3-phosphate dehydrogenase which seems to be a key component of the pancreatic beta-cell glucose-sensing device. In Bos taurus (Bovine), this protein is Glycerol-3-phosphate dehydrogenase, mitochondrial (GPD2).